We begin with the raw amino-acid sequence, 135 residues long: Interleukin-4 (135 aa).

The N-terminal stretch at 1 to 24 (MGLTYQLIPVLVCLLVCTSHLVHG) is a signal peptide. Intrachain disulfides connect cysteine 27–cysteine 135, cysteine 48–cysteine 85, and cysteine 70–cysteine 105. The N-linked (GlcNAc...) asparagine glycan is linked to asparagine 62.

Belongs to the IL-4/IL-13 family.

The protein localises to the secreted. Participates in at least several B-cell activation processes as well as of other cell types. It is a costimulator of DNA-synthesis. It induces the expression of class II MHC molecules on resting B-cells. It enhances both secretion and cell surface expression of IgE and IgG1. It also regulates the expression of the low affinity Fc receptor for IgE (CD23) on both lymphocytes and monocytes. Positively regulates IL31RA expression in macrophages. Stimulates autophagy in dendritic cells by interfering with mTORC1 signaling and through the induction of RUFY4. This chain is Interleukin-4 (IL4), found in Bubalus bubalis (Domestic water buffalo).